The primary structure comprises 309 residues: Ferredoxin--NADP reductase (309 aa).

Residues Asp25, Gln33, Tyr38, Val77, Phe107, Asp267, and Thr307 each contribute to the FAD site.

It belongs to the ferredoxin--NADP reductase type 2 family. Homodimer. It depends on FAD as a cofactor.

It carries out the reaction 2 reduced [2Fe-2S]-[ferredoxin] + NADP(+) + H(+) = 2 oxidized [2Fe-2S]-[ferredoxin] + NADPH. The polypeptide is Ferredoxin--NADP reductase (Lactobacillus acidophilus (strain ATCC 700396 / NCK56 / N2 / NCFM)).